The primary structure comprises 344 residues: 1-acyl-sn-glycerol-3-phosphate acyltransferase BAT2, chloroplastic (344 aa).

The transit peptide at 1-49 directs the protein to the chloroplast; that stretch reads MDVASAPGVSSHPPYYSKPICSSQSSLIRIPINKGCCFARSSNLITSLH. A helical transmembrane segment spans residues 113-133; the sequence is GICFCLVAGVSAIVLIVLMIT. Residues 188 to 193 carry the HXXXXD motif motif; that stretch reads HQSFLD. Residues 210–230 traverse the membrane as a helical segment; that stretch reads TGIFVIPVIGWAMSMMGVVPL.

It belongs to the 1-acyl-sn-glycerol-3-phosphate acyltransferase family. As to expression, widely expressed.

The protein resides in the plastid. It localises to the chloroplast membrane. It carries out the reaction a fatty acyl-[ACP] + a 1-acyl-sn-glycero-3-phosphate = a 1,2-diacyl-sn-glycero-3-phosphate + holo-[ACP]. The catalysed reaction is a 1-acyl-sn-glycero-3-phosphate + an acyl-CoA = a 1,2-diacyl-sn-glycero-3-phosphate + CoA. It participates in phospholipid metabolism; CDP-diacylglycerol biosynthesis; CDP-diacylglycerol from sn-glycerol 3-phosphate: step 2/3. Its function is as follows. Plastidial enzyme of the prokaryotic glycerol-3-phosphate pathway that converts lysophosphatidic acid (LPA) into phosphatidic acid by incorporating an acyl moiety at position sn-2. Utilizes palmitoyl-ACP (16:0-ACP) to produce phosphatidic acid containing a saturated group at position sn-2, which is characteristic of lipids synthesized by the prokaryotic pathway. In vitro, can use 16:0-CoA as acyl donor. The polypeptide is 1-acyl-sn-glycerol-3-phosphate acyltransferase BAT2, chloroplastic (Brassica napus (Rape)).